A 536-amino-acid polypeptide reads, in one-letter code: G-protein coupled receptor Mth2 (536 aa).

The Extracellular portion of the chain corresponds to 1–210 (MAERDHYHTI…DDNSTVKIIN (210 aa)). 5 disulfides stabilise this stretch: Cys17-Cys71, Cys73-Cys78, Cys82-Cys177, Cys83-Cys96, and Cys138-Cys197. Asn24 and Asn33 each carry an N-linked (GlcNAc...) asparagine glycan. N-linked (GlcNAc...) asparagine glycans are attached at residues Asn103, Asn113, Asn118, Asn159, Asn184, and Asn203. Residues 211–231 (AYAMMFSIPFMMLTIAVYLLI) traverse the membrane as a helical segment. The Cytoplasmic portion of the chain corresponds to 232-241 (PELRNQHGKS). Residues 242 to 262 (LVCYLVGLTVGYTSLCYVQLY) traverse the membrane as a helical segment. At 263 to 273 (QVDATGDACKV) the chain is on the extracellular side. Residues 274 to 294 (FGYTAYFFFMGAYMWLSVISF) traverse the membrane as a helical segment. Over 295–314 (DLWHNFRGTRGINRFQEKKR) the chain is Cytoplasmic. The chain crosses the membrane as a helical span at residues 315-335 (FLFYSLYSWGIAVVFLAFTYI). Topologically, residues 336-365 (AQELTNLPAYLKPGIGDGVYCWLDMSNWAA) are extracellular. Residues 366–386 (MIYFYGPILVIVVANTIMFIM) form a helical membrane-spanning segment. The Cytoplasmic segment spans residues 387 to 417 (TAIKIHGVQREMARIIASENSTKNLRTEKDK). The chain crosses the membrane as a helical span at residues 418 to 438 (FGLFLRLFLIMGITWLTELIS). The Extracellular portion of the chain corresponds to 439–449 (YFVGSDKGWSK). Residues 450–470 (LFYISDLANAMQGFLIFMLFV) traverse the membrane as a helical segment. The Cytoplasmic segment spans residues 471–536 (MKKKVKHLIT…VDPQKTTIFR (66 aa)). The interval 487–506 (RDGSNQRQSQYSTKTTSSSV) is disordered. Positions 492–505 (QRQSQYSTKTTSSS) are enriched in low complexity.

Belongs to the G-protein coupled receptor 2 family. Mth subfamily. As to quaternary structure, homodimer.

It is found in the cell membrane. In terms of biological role, involved in biological aging and stress response. Essential for adult survival. The chain is G-protein coupled receptor Mth2 (mth2) from Drosophila yakuba (Fruit fly).